The chain runs to 210 residues: MSLSRTQIVNWLTRCGDIFSTESEYLTGLDREIGDADHGLNMNRGFSKVVEKLPAIADKDIGFILKNTGMTLLSSVGGASGPLFGTFFIRAAQATQARQSLTLEELYQMFRDGADGVISRGKAEPGDKTMCDVWVPVVESLRQSSEQNLSVPVALEAASSIAESAAQSTITMQARKGRASYLGERSIGHQDPGATSVMFMMQMLALAAKE.

Positions 6–206 (TQIVNWLTRC…VMFMMQMLAL (201 aa)) constitute a DhaL domain. Mg(2+)-binding residues include aspartate 30, aspartate 35, and aspartate 37. ADP is bound by residues 38 to 41 (HGLN), 79 to 80 (AS), glycine 121, methionine 130, arginine 178, and 191 to 193 (DPG).

As to quaternary structure, homodimer. The dihydroxyacetone kinase complex is composed of a homodimer of DhaM, a homodimer of DhaK and the subunit DhaL. DhaL also forms a complex with DhaR. The cofactor is Mg(2+).

It is found in the cytoplasm. It catalyses the reaction dihydroxyacetone + phosphoenolpyruvate = dihydroxyacetone phosphate + pyruvate. It functions in the pathway polyol metabolism; glycerol degradation. In terms of biological role, ADP-binding subunit of the dihydroxyacetone kinase, which is responsible for the phosphoenolpyruvate (PEP)-dependent phosphorylation of dihydroxyacetone. DhaL-ADP is converted to DhaL-ATP via a phosphoryl group transfer from DhaM and transmits it to dihydroxyacetone bound to DhaK. DhaL also acts as coactivator of the transcription activator DhaR by binding to the sensor domain of DhaR. In the presence of dihydroxyacetone, DhaL-ADP displaces DhaK and stimulates DhaR activity. In the absence of dihydroxyacetone, DhaL-ADP is converted by the PTS to DhaL-ATP, which does not bind to DhaR. This Escherichia coli (strain K12) protein is PEP-dependent dihydroxyacetone kinase, ADP-binding subunit DhaL.